The chain runs to 43 residues: Bacteriocin leucocin-C (43 aa).

Residues Cys9 and Cys14 are joined by a disulfide bond.

The protein resides in the secreted. In terms of biological role, inhibits a wide spectrum of lactic acid bacteria. The polypeptide is Bacteriocin leucocin-C (Leuconostoc mesenteroides).